Here is a 263-residue protein sequence, read N- to C-terminus: Malonyl-[acyl-carrier protein] O-methyltransferase (263 aa).

The protein belongs to the methyltransferase superfamily.

It catalyses the reaction malonyl-[ACP] + S-adenosyl-L-methionine = malonyl-[ACP] methyl ester + S-adenosyl-L-homocysteine. The protein operates within cofactor biosynthesis; biotin biosynthesis. Its function is as follows. Converts the free carboxyl group of a malonyl-thioester to its methyl ester by transfer of a methyl group from S-adenosyl-L-methionine (SAM). It allows to synthesize pimeloyl-ACP via the fatty acid synthetic pathway. The protein is Malonyl-[acyl-carrier protein] O-methyltransferase of Chlorobium luteolum (strain DSM 273 / BCRC 81028 / 2530) (Pelodictyon luteolum).